A 252-amino-acid polypeptide reads, in one-letter code: Thiamine thiazole synthase (252 aa).

NAD(+) contacts are provided by residues serine 35, 54 to 55 (EK), glycine 62, valine 126, and 152 to 154 (HVD). Aspartate 154 and histidine 169 together coordinate Fe cation. An NAD(+)-binding site is contributed by methionine 217. Arginine 227 contributes to the glycine binding site.

The protein belongs to the THI4 family. Homooctamer; tetramer of dimers. Fe(2+) serves as cofactor.

It catalyses the reaction hydrogen sulfide + glycine + NAD(+) = ADP-5-ethyl-4-methylthiazole-2-carboxylate + nicotinamide + 3 H2O + H(+). Its pathway is cofactor biosynthesis; thiamine diphosphate biosynthesis. In terms of biological role, involved in the biosynthesis of the thiazole moiety of thiamine. Catalyzes the conversion of NAD and glycine to adenosine diphosphate 5-(2-hydroxyethyl)-4-methylthiazole-2-carboxylate (ADT), an adenylated thiazole intermediate, using free sulfide as a source of sulfur. This is Thiamine thiazole synthase from Pyrococcus abyssi (strain GE5 / Orsay).